A 311-amino-acid chain; its full sequence is Porphobilinogen deaminase (311 aa).

The residue at position 241 (Cys-241) is an S-(dipyrrolylmethanemethyl)cysteine.

This sequence belongs to the HMBS family. In terms of assembly, monomer. The cofactor is dipyrromethane.

The enzyme catalyses 4 porphobilinogen + H2O = hydroxymethylbilane + 4 NH4(+). Its pathway is porphyrin-containing compound metabolism; protoporphyrin-IX biosynthesis; coproporphyrinogen-III from 5-aminolevulinate: step 2/4. Its function is as follows. Tetrapolymerization of the monopyrrole PBG into the hydroxymethylbilane pre-uroporphyrinogen in several discrete steps. This Campylobacter curvus (strain 525.92) protein is Porphobilinogen deaminase.